Reading from the N-terminus, the 703-residue chain is Protein STRUBBELIG-RECEPTOR FAMILY 8 (703 aa).

The signal sequence occupies residues 1–27 (MAIGDRAMFTVLLLFIASISGFSVVRC). Residues 28-291 (VTDPSDVQAL…GKGLSGGVVT (264 aa)) are Extracellular-facing. LRR repeat units follow at residues 96–120 (LKSLRKLDVSGNSIHDTLPYQLPPN), 122–142 (TSLNLARNNLSGNLPYSISAM), 143–165 (GSLSYMNVSGNSLTMSIGDIFAD), 166–190 (HKSLATLDLSHNNFSGDLPSSLSTV), 192–212 (TLSVLYVQNNQLTGSIDVLSG), 213–233 (LPLKTLNVANNHFNGSIPKEL), and 234–256 (SSIQTLIYDGNSFDNVPASPQPE). Asn120, Asn130, Asn149, and Asn178 each carry an N-linked (GlcNAc...) asparagine glycan. N-linked (GlcNAc...) asparagine glycosylation occurs at Asn226. The segment at 247 to 284 (DNVPASPQPERPGKKETPSGSKKPKIGSEEKSSDSGKG) is disordered. The helical transmembrane segment at 292–312 (GIVFGSLFVAGIIALVLYLCL) threads the bilayer. Topologically, residues 313 to 703 (HKKKRKVRGS…PEHEHVDISF (391 aa)) are cytoplasmic. In terms of domain architecture, Protein kinase spans 395-672 (FSQENIIGEG…SEVVQQLVRL (278 aa)). ATP is bound by residues 401–409 (IGEGSLGRV) and Lys423.

The protein belongs to the protein kinase superfamily. Ser/Thr protein kinase family. As to expression, expressed in seedlings, roots, stems, leaves, flowers and siliques.

The protein resides in the membrane. This Arabidopsis thaliana (Mouse-ear cress) protein is Protein STRUBBELIG-RECEPTOR FAMILY 8 (SRF8).